Consider the following 65-residue polypeptide: 7 kDa A-type inclusion protein (65 aa).

Positions 1-20 (MSNQNIPQLSEYQTSVSQVA) are enriched in polar residues. A disordered region spans residues 1–32 (MSNQNIPQLSEYQTSVSQVAVTPPPKPKTPQI).

In Bos taurus (Bovine), this protein is 7 kDa A-type inclusion protein.